The primary structure comprises 299 residues: tRNA dimethylallyltransferase (299 aa).

13–20 (GPTASGKT) is a binding site for ATP. Residue 15 to 20 (TASGKT) coordinates substrate. Positions 38–41 (DSRQ) are interaction with substrate tRNA.

Belongs to the IPP transferase family. Monomer. The cofactor is Mg(2+).

It carries out the reaction adenosine(37) in tRNA + dimethylallyl diphosphate = N(6)-dimethylallyladenosine(37) in tRNA + diphosphate. Catalyzes the transfer of a dimethylallyl group onto the adenine at position 37 in tRNAs that read codons beginning with uridine, leading to the formation of N6-(dimethylallyl)adenosine (i(6)A). The chain is tRNA dimethylallyltransferase from Synechococcus sp. (strain CC9605).